The following is a 386-amino-acid chain: Succinate--CoA ligase [ADP-forming] subunit beta (386 aa).

The 236-residue stretch at 9-244 (KEILRKYGVP…HDEEDPLETR (236 aa)) folds into the ATP-grasp domain. ATP-binding positions include lysine 46, 53–55 (GRG), glutamate 99, cysteine 102, and glutamate 107. Asparagine 199 and aspartate 213 together coordinate Mg(2+). Residues asparagine 264 and 321-323 (GIM) each bind substrate.

The protein belongs to the succinate/malate CoA ligase beta subunit family. Heterotetramer of two alpha and two beta subunits. Mg(2+) serves as cofactor.

The enzyme catalyses succinate + ATP + CoA = succinyl-CoA + ADP + phosphate. The catalysed reaction is GTP + succinate + CoA = succinyl-CoA + GDP + phosphate. The protein operates within carbohydrate metabolism; tricarboxylic acid cycle; succinate from succinyl-CoA (ligase route): step 1/1. Functionally, succinyl-CoA synthetase functions in the citric acid cycle (TCA), coupling the hydrolysis of succinyl-CoA to the synthesis of either ATP or GTP and thus represents the only step of substrate-level phosphorylation in the TCA. The beta subunit provides nucleotide specificity of the enzyme and binds the substrate succinate, while the binding sites for coenzyme A and phosphate are found in the alpha subunit. The polypeptide is Succinate--CoA ligase [ADP-forming] subunit beta (Rickettsia typhi (strain ATCC VR-144 / Wilmington)).